A 454-amino-acid chain; its full sequence is Na(+)/H(+) antiporter NhaA (454 aa).

Transmembrane regions (helical) follow at residues 22–42 (ISGLIMLGFALAGLLLANLPF), 64–84 (MGLGHWVQDGLLTVFFLTVGL), 106–126 (LCAVGGMLAPPVLFIGVISLF), 150–170 (GWAVPTATDIAFSLAVLALFA), 190–210 (LLAIILIAVFFSSVNAWYWFL), 228–248 (VPWLAVAIVGVLAWVMMFEAG), 284–304 (PFSALLALPIFALFATGVHFE), 306–326 (LTLALFVSPVVVAVMVALVVG), 355–375 (MFPAACACGIGFTVSFLIASL), and 386–406 (ARFGVLVGSMVAAVISGILLS).

It belongs to the NhaA Na(+)/H(+) (TC 2.A.33) antiporter family.

The protein localises to the cell membrane. The enzyme catalyses Na(+)(in) + 2 H(+)(out) = Na(+)(out) + 2 H(+)(in). In terms of biological role, na(+)/H(+) antiporter that extrudes sodium in exchange for external protons. This is Na(+)/H(+) antiporter NhaA from Bifidobacterium adolescentis (strain ATCC 15703 / DSM 20083 / NCTC 11814 / E194a).